The chain runs to 133 residues: Large ribosomal subunit protein uL11 (133 aa).

This sequence belongs to the universal ribosomal protein uL11 family. Part of the ribosomal stalk of the 50S ribosomal subunit. Interacts with L10 and the large rRNA to form the base of the stalk. L10 forms an elongated spine to which 2 L12 dimers bind in a sequential fashion forming a pentameric L10(L12)2(L12)2 complex. In terms of processing, one or more lysine residues are methylated.

In terms of biological role, forms part of the ribosomal stalk which helps the ribosome interact with GTP-bound translation factors. The polypeptide is Large ribosomal subunit protein uL11 (Geobacillus stearothermophilus (Bacillus stearothermophilus)).